We begin with the raw amino-acid sequence, 498 residues long: Pyridine nucleotide-disulfide oxidoreductase domain-containing protein 1 (498 aa).

N-acetylmethionine is present on M1.

The protein belongs to the class-I pyridine nucleotide-disulfide oxidoreductase family. PYROXD1 subfamily. It depends on FAD as a cofactor.

Its subcellular location is the nucleus. The protein localises to the cytoplasm. It is found in the myofibril. The protein resides in the sarcomere. Its function is as follows. Probable FAD-dependent oxidoreductase; involved in the cellular oxidative stress response. Required for normal sarcomere structure and muscle fiber integrity. This chain is Pyridine nucleotide-disulfide oxidoreductase domain-containing protein 1 (Pyroxd1), found in Mus musculus (Mouse).